Consider the following 329-residue polypeptide: Beta-ketoacyl-[acyl-carrier-protein] synthase III (329 aa).

Active-site residues include cysteine 114 and histidine 254. An ACP-binding region spans residues 255–259 (QANLR). The active site involves asparagine 284.

The protein belongs to the thiolase-like superfamily. FabH family. In terms of assembly, homodimer.

It localises to the cytoplasm. The enzyme catalyses malonyl-[ACP] + acetyl-CoA + H(+) = 3-oxobutanoyl-[ACP] + CO2 + CoA. It participates in lipid metabolism; fatty acid biosynthesis. Catalyzes the condensation reaction of fatty acid synthesis by the addition to an acyl acceptor of two carbons from malonyl-ACP. Catalyzes the first condensation reaction which initiates fatty acid synthesis and may therefore play a role in governing the total rate of fatty acid production. Possesses both acetoacetyl-ACP synthase and acetyl transacylase activities. Its substrate specificity determines the biosynthesis of branched-chain and/or straight-chain of fatty acids. This chain is Beta-ketoacyl-[acyl-carrier-protein] synthase III, found in Roseiflexus sp. (strain RS-1).